A 1601-amino-acid chain; its full sequence is PH and SEC7 domain-containing protein (1601 aa).

The mediates regulation of axon branching and microtubule organization stretch occupies residues 1 to 340; sequence MSEELKVVLR…TGDLILNLSR (340 aa). The region spanning 6–88 is the PDZ domain; sequence KVVLRRSEQH…LVTLELKRDP (83 aa). Disordered stretches follow at residues 113–192, 211–322, 339–440, 459–657, 737–780, 872–965, and 1040–1126; these read NIYD…SSTK, TSPT…PAKA, SRTP…SLTN, LEED…SSSG, NSSL…SETA, QQQQ…LLSC, and QQLK…SDVE. Residues 118–128 show a composition bias toward polar residues; that stretch reads HSSSTNSSPNH. The span at 166-191 shows a compositional bias: low complexity; sequence ASGSTTTTTTATHTHSHSRNSSASST. Polar residues predominate over residues 283 to 297; it reads QSLQHSNSYSGSPVT. The segment covering 300–311 has biased composition (basic and acidic residues); the sequence is RFADREPEREPE. Residues 323–340 carry the Microtubule elimination domain (MTED); Binds tubulin and blocks microtubule polymerization motif; sequence PRFEAYMMTGDLILNLSR. Positions 339–348 are enriched in polar residues; that stretch reads SRTPQTSNPL. Residues 353–362 are compositionally biased toward basic and acidic residues; sequence KKIDSLRDSP. Composition is skewed to low complexity over residues 382–399, 409–424, and 468–487; these read SSPT…TSSD, QKQQ…QQQQ, and QRQQ…YEYY. Residues 488-505 show a composition bias toward acidic residues; sequence QNEDELEEQEEVEEEREE. Residues 510–519 show a composition bias toward polar residues; sequence YDITNIETYQ. Acidic residues predominate over residues 526 to 557; the sequence is DDDDSDRQCLVDDDDDDDAYDDEENDAGDEDY. 2 stretches are compositionally biased toward polar residues: residues 558–567 and 617–630; these read STNSLGSGSA and TSFS…SLST. The segment covering 640 to 657 has biased composition (low complexity); it reads SVPTSPEPSSLVPESSSG. Residues 737 to 747 are compositionally biased toward polar residues; sequence NSSLASNNNEG. Composition is skewed to low complexity over residues 752 to 780, 872 to 942, 949 to 965, and 1040 to 1052; these read NRSS…SETA, QQQQ…QQQQ, GGQV…LLSC, and QQLK…QQQQ. Residues 894 to 1601 are mediates association to the membrane and rescricts the microtubule-inhibiting activity to the cell cortex; sequence SSSPQHSAVG…PTNRKEKKKK (708 aa). The span at 1053–1071 shows a compositional bias: basic and acidic residues; sequence QRERERDRDRDREQSEHKV. Residues 1125-1291 enclose the SEC7 domain; sequence VESLHSYHYS…KSLYQAIKTK (167 aa). Residues 1332–1445 enclose the PH domain; it reads VEYKKGYVMR…WVETINYVCA (114 aa). The interval 1544 to 1601 is disordered; it reads LELQAQQPSPASHEEEADTFPVGTTACTPPTPQSINQKDQQKEQQQQQPTNRKEKKKK. The span at 1568 to 1579 shows a compositional bias: polar residues; sequence TACTPPTPQSIN.

The protein belongs to the PSD family. As to quaternary structure, interacts (via MTED motif) with tubulin. Expressed in the head (at protein level).

It localises to the cell projection. The protein localises to the axon. It is found in the cytoplasm. Its subcellular location is the cell membrane. The protein resides in the cell cortex. Functionally, guanine nucleotide exchange factor for Arf6. Regulates axon growth and branching by inhibiting microtubule polymerisation at the cortex. Together with shot, promotes axonal microtubule bundle integrity. Required for normal ethanol-induced tolerance and preference. Probably by activating Arf6, counteracts ethanol-induced sedation. This is PH and SEC7 domain-containing protein from Drosophila melanogaster (Fruit fly).